A 171-amino-acid chain; its full sequence is MEQQSSYNKEELLSCGRGELFGPGNAQLPLPPMLMFDRITHISEEGGAYGKGEIRAELDVKKDLWFFECHFNDDPVMPGCLGLDAMWQLIGFFLGWTGGPGRGRALGAGEVKFYGQVLPTAKKVEYVINMKRVIKRKLYMGIGDAHLYVDGREIYSADDLKVGLFTNTDNF.

H70 is a catalytic residue.

This sequence belongs to the thioester dehydratase family. FabA subfamily. As to quaternary structure, homodimer.

It is found in the cytoplasm. It catalyses the reaction a (3R)-hydroxyacyl-[ACP] = a (2E)-enoyl-[ACP] + H2O. The catalysed reaction is (3R)-hydroxydecanoyl-[ACP] = (2E)-decenoyl-[ACP] + H2O. It carries out the reaction (2E)-decenoyl-[ACP] = (3Z)-decenoyl-[ACP]. It functions in the pathway lipid metabolism; fatty acid biosynthesis. Its function is as follows. Necessary for the introduction of cis unsaturation into fatty acids. Catalyzes the dehydration of (3R)-3-hydroxydecanoyl-ACP to E-(2)-decenoyl-ACP and then its isomerization to Z-(3)-decenoyl-ACP. Can catalyze the dehydratase reaction for beta-hydroxyacyl-ACPs with saturated chain lengths up to 16:0, being most active on intermediate chain length. The chain is 3-hydroxydecanoyl-[acyl-carrier-protein] dehydratase from Hydrogenovibrio crunogenus (strain DSM 25203 / XCL-2) (Thiomicrospira crunogena).